Reading from the N-terminus, the 100-residue chain is Integration host factor subunit beta (100 aa).

Residues 53 to 100 (LHHRPPRIGRNPKTGEPVALPGKYVPHFKPGKELRDRVNAGRHNPIQS) are disordered. Basic and acidic residues predominate over residues 82–91 (PGKELRDRVN).

Belongs to the bacterial histone-like protein family. As to quaternary structure, heterodimer of an alpha and a beta chain.

Its function is as follows. This protein is one of the two subunits of integration host factor, a specific DNA-binding protein that functions in genetic recombination as well as in transcriptional and translational control. This chain is Integration host factor subunit beta, found in Alkalilimnicola ehrlichii (strain ATCC BAA-1101 / DSM 17681 / MLHE-1).